The primary structure comprises 135 residues: C-type lectin BpLec (135 aa).

4 cysteine pairs are disulfide-bonded: C3–C14, C31–C131, C38–C133, and C106–C123. The C-type lectin domain occupies 10 to 132 (MNGLCYKIFD…CESKNAFLCQ (123 aa)). Ca(2+) is bound by residues Q96, D98, E104, N119, and D120. Positions 96-98 (QPD) match the Galactose-binding motif.

The protein belongs to the true venom lectin family. As to quaternary structure, homodimer; disulfide-linked. Expressed by the venom gland.

It localises to the secreted. In terms of biological role, this lectin displays hemagglutinating activity on dog (128'000 HU/mg) and cat erythrocytes, that is inhibited by beta-galactosides (D-galactose, D-lactose, and N-acetyl-D-galactosamine) and EDTA. In addition, has been shown to hemagglutinate promastigote forms of Leishmania amazonensis. Also inhibits Gram-positive (S.aureus ATCC 25923) (MIC is 31.25 ug/ml) but not Gram-negative (E.coli ATCC 25922) bacteria. Is a calcium-dependent lectin. This Bothrops pauloensis (Neuwied's lancehead) protein is C-type lectin BpLec.